The primary structure comprises 171 residues: 16S rRNA aminocarboxypropyltransferase (171 aa).

Positions 18, 68, 91, and 110 each coordinate S-adenosyl-L-methionine.

The protein belongs to the TDD superfamily. TSR3 family.

The protein resides in the cytoplasm. It carries out the reaction an N(1)-methylpseudouridine in rRNA + S-adenosyl-L-methionine = N(1)-methyl-N(3)-[(3S)-3-amino-3-carboxypropyl]pseudouridine in rRNA + S-methyl-5'-thioadenosine + H(+). In terms of biological role, aminocarboxypropyltransferase that catalyzes the aminocarboxypropyl transfer on pseudouridine corresponding to position 914 in M.jannaschii 16S rRNA. It constitutes the last step in biosynthesis of the hypermodified N1-methyl-N3-(3-amino-3-carboxypropyl) pseudouridine (m1acp3-Psi). The polypeptide is 16S rRNA aminocarboxypropyltransferase (Methanosphaera stadtmanae (strain ATCC 43021 / DSM 3091 / JCM 11832 / MCB-3)).